The primary structure comprises 398 residues: Phosphoglycerate kinase (398 aa).

Substrate is bound by residues 23-25 (DLN), Arg38, 61-64 (HFGR), Arg120, and Arg153. Residues Lys203, Glu325, and 355–358 (GGDT) contribute to the ATP site.

This sequence belongs to the phosphoglycerate kinase family. In terms of assembly, monomer.

It is found in the cytoplasm. It catalyses the reaction (2R)-3-phosphoglycerate + ATP = (2R)-3-phospho-glyceroyl phosphate + ADP. Its pathway is carbohydrate degradation; glycolysis; pyruvate from D-glyceraldehyde 3-phosphate: step 2/5. This chain is Phosphoglycerate kinase, found in Chelativorans sp. (strain BNC1).